The following is a 689-amino-acid chain: Glycine--tRNA ligase beta subunit (689 aa).

This sequence belongs to the class-II aminoacyl-tRNA synthetase family. Tetramer of two alpha and two beta subunits.

Its subcellular location is the cytoplasm. It carries out the reaction tRNA(Gly) + glycine + ATP = glycyl-tRNA(Gly) + AMP + diphosphate. The polypeptide is Glycine--tRNA ligase beta subunit (Escherichia coli O127:H6 (strain E2348/69 / EPEC)).